The chain runs to 211 residues: Protein-methionine-sulfoxide reductase heme-binding subunit MsrQ (211 aa).

The next 4 membrane-spanning stretches (helical) occupy residues 10-30 (WLKVCLHLAGLLPFLWLVWAI), 82-102 (LWCFAWATLHLTSYALLELGV), 116-136 (PYLTLGIISWIILLALAFTST), and 153-173 (FVYLVAILAPIHYLWSVKIIS).

It belongs to the MsrQ family. As to quaternary structure, heterodimer of a catalytic subunit (MsrP) and a heme-binding subunit (MsrQ). Requires FMN as cofactor. Heme b serves as cofactor.

The protein resides in the cell inner membrane. Functionally, part of the MsrPQ system that repairs oxidized periplasmic proteins containing methionine sulfoxide residues (Met-O), using respiratory chain electrons. Thus protects these proteins from oxidative-stress damage caused by reactive species of oxygen and chlorine generated by the host defense mechanisms. MsrPQ is essential for the maintenance of envelope integrity under bleach stress, rescuing a wide series of structurally unrelated periplasmic proteins from methionine oxidation, including the primary periplasmic chaperone SurA and the lipoprotein Pal. MsrQ provides electrons for reduction to the reductase catalytic subunit MsrP, using the quinone pool of the respiratory chain. This chain is Protein-methionine-sulfoxide reductase heme-binding subunit MsrQ, found in Escherichia coli O157:H7.